The primary structure comprises 400 residues: Phosphoglycerate kinase (400 aa).

Substrate-binding positions include 21-23 (DLN), arginine 36, 59-62 (HLGR), arginine 116, and arginine 149. ATP is bound by residues lysine 200, glutamate 317, and 343–346 (GGDT).

The protein belongs to the phosphoglycerate kinase family. In terms of assembly, monomer.

It is found in the cytoplasm. It carries out the reaction (2R)-3-phosphoglycerate + ATP = (2R)-3-phospho-glyceroyl phosphate + ADP. It participates in carbohydrate degradation; glycolysis; pyruvate from D-glyceraldehyde 3-phosphate: step 2/5. This Blochmanniella floridana protein is Phosphoglycerate kinase.